The sequence spans 295 residues: GTPase Era (295 aa).

Residues 7-176 form the Era-type G domain; sequence KTVSVCIIGR…ITSKAKIAPW (170 aa). The tract at residues 15–22 is G1; the sequence is GRPNSGKS. 15-22 is a GTP binding site; sequence GRPNSGKS. A G2 region spans residues 41–45; it reads QTTRS. A G3 region spans residues 62 to 65; it reads DTPG. GTP-binding positions include 62-66 and 124-127; these read DTPGI and NKID. The tract at residues 124-127 is G4; that stretch reads NKID. The G5 stretch occupies residues 152–154; the sequence is ISA. The region spanning 204 to 281 is the KH type-2 domain; it reads LQQELPYKLT…HLFLFVKVRE (78 aa).

Belongs to the TRAFAC class TrmE-Era-EngA-EngB-Septin-like GTPase superfamily. Era GTPase family. Monomer.

The protein resides in the cytoplasm. The protein localises to the cell inner membrane. In terms of biological role, an essential GTPase that binds both GDP and GTP, with rapid nucleotide exchange. Plays a role in 16S rRNA processing and 30S ribosomal subunit biogenesis and possibly also in cell cycle regulation and energy metabolism. This is GTPase Era from Rickettsia bellii (strain OSU 85-389).